The primary structure comprises 187 residues: Benzene 1,2-dioxygenase subunit beta (187 aa).

This sequence belongs to the bacterial ring-hydroxylating dioxygenase beta subunit family. As to quaternary structure, this dioxygenase system consists of four proteins: the two subunits of the hydroxylase component (BnzA and BnzB), a ferredoxin (BnzC) and a ferredoxin reductase (BnzD). It depends on [2Fe-2S] cluster as a cofactor. Fe cation is required as a cofactor.

The enzyme catalyses benzene + NADH + O2 + H(+) = cis-1,2-dihydrobenzene-1,2-diol + NAD(+). It catalyses the reaction toluene + NADH + O2 + H(+) = (1S,2R)-3-methylcyclohexa-3,5-diene-1,2-diol + NAD(+). It participates in aromatic compound metabolism; benzene degradation; catechol from benzene: step 1/2. It functions in the pathway xenobiotic degradation; toluene degradation. Its pathway is xenobiotic degradation; xylene degradation. In terms of biological role, catalyzes both the oxidation of benzene and toluene. The beta subunit may be responsible for the substrate specificity of the enzyme. The sequence is that of Benzene 1,2-dioxygenase subunit beta (bnzB) from Pseudomonas putida (strain ATCC 700007 / DSM 6899 / JCM 31910 / BCRC 17059 / LMG 24140 / F1).